A 180-amino-acid chain; its full sequence is Protein C2-DOMAIN ABA-RELATED 10 (180 aa).

The 105-residue stretch at 1–105 (MDQKPLGLLT…EALKMGMELL (105 aa)) folds into the C2 domain. The Ca(2+) site is built by arginine 22, aspartate 23, aspartate 28, aspartate 74, tryptophan 75, aspartate 76, and aspartate 82.

This sequence belongs to the plant CAR protein family. Binds to PYR/PYL/RCAR abscisic acid intracellular receptors in an ABA-independent manner, both at the plasma membrane and in the nucleus.

It localises to the cell membrane. It is found in the nucleus. In terms of biological role, stimulates the GTPase/ATPase activities of Obg-like ATPases. Mediates the transient calcium-dependent interaction of PYR/PYL/RCAR abscisic acid (ABA) receptors with the plasma membrane and thus regulates ABA sensitivity. The chain is Protein C2-DOMAIN ABA-RELATED 10 from Arabidopsis thaliana (Mouse-ear cress).